Consider the following 264-residue polypeptide: Glutamate racemase 2 (264 aa).

Substrate is bound by residues 10-11 (DS) and 42-43 (YG). Cys73 serves as the catalytic Proton donor/acceptor. 74-75 (NT) is a substrate binding site. Cys181 functions as the Proton donor/acceptor in the catalytic mechanism. 182–183 (TH) provides a ligand contact to substrate.

This sequence belongs to the aspartate/glutamate racemases family.

It catalyses the reaction L-glutamate = D-glutamate. It functions in the pathway cell wall biogenesis; peptidoglycan biosynthesis. Its function is as follows. Provides the (R)-glutamate required for cell wall biosynthesis. In Caldanaerobacter subterraneus subsp. tengcongensis (strain DSM 15242 / JCM 11007 / NBRC 100824 / MB4) (Thermoanaerobacter tengcongensis), this protein is Glutamate racemase 2.